Reading from the N-terminus, the 166-residue chain is Large ribosomal subunit protein bL19 (166 aa).

The protein belongs to the bacterial ribosomal protein bL19 family.

Its function is as follows. This protein is located at the 30S-50S ribosomal subunit interface and may play a role in the structure and function of the aminoacyl-tRNA binding site. The chain is Large ribosomal subunit protein bL19 from Chelativorans sp. (strain BNC1).